A 145-amino-acid chain; its full sequence is Putative pre-16S rRNA nuclease (145 aa).

The protein belongs to the YqgF nuclease family.

It is found in the cytoplasm. Its function is as follows. Could be a nuclease involved in processing of the 5'-end of pre-16S rRNA. The sequence is that of Putative pre-16S rRNA nuclease from Pseudomonas fluorescens.